The chain runs to 324 residues: Proto-oncogene Mas (324 aa).

The Extracellular segment spans residues 1 to 35 (MDQSNMTSFAEEKAMNTSSRNASLGTSHPPIPIVH). 3 N-linked (GlcNAc...) asparagine glycosylation sites follow: Asn5, Asn16, and Asn21. Residues 36–60 (WVIMSISPLGFVENGILLWFLCFRM) form a helical membrane-spanning segment. The Cytoplasmic segment spans residues 61 to 64 (RRNP). The chain crosses the membrane as a helical span at residues 65-86 (FTVYITHLSIADISLLFCIFIL). The Extracellular segment spans residues 87 to 103 (SIDYALDYELSSGHYYT). Residues 104–127 (IVTLSVTFLFGYNTGLYLLTAISV) form a helical membrane-spanning segment. At 128–148 (ERCLSVLYPIWYRCHRPKHQS) the chain is on the cytoplasmic side. A helical transmembrane segment spans residues 149–171 (AFVCALLWALSCLVTTMEYVMCI). The Extracellular segment spans residues 172–184 (DSGEESHSQSDCR). Residues 185-205 (AVIIFIAILSFLVFTPLMLVS) traverse the membrane as a helical segment. Residues 206 to 223 (STILVVKIRKNTWASHSS) are Cytoplasmic-facing. A helical transmembrane segment spans residues 224-244 (KLYIVIMVTIIIFLIFAMPMR). Residues 245 to 262 (VLYLLYYEYWSTFGNLHN) are Extracellular-facing. Residues 263–283 (ISLLFSTINSSANPFIYFFVG) traverse the membrane as a helical segment. The Cytoplasmic segment spans residues 284 to 324 (SSKKKRFRESLKVVLTRAFKDEMQPRRQEGNGNTVSIETVV).

It belongs to the G-protein coupled receptor 1 family. As to quaternary structure, interacts with AGTR1. Interacts with FLNA (via filamin repeat 21); increases PKA-mediated phosphorylation of FLNA. Expressed in platelets.

The protein resides in the cell membrane. In terms of biological role, receptor for angiotensin 1-7. Acts specifically as a functional antagonist of AGTR1 (angiotensin-2 type 1 receptor), although it up-regulates AGTR1 receptor levels. Positive regulation of AGTR1 levels occurs through activation of the G-proteins GNA11 and GNAQ, and stimulation of the protein kinase C signaling cascade. The antagonist effect on AGTR1 function is probably due to AGTR1 being physically altered by MAS1. This is Proto-oncogene Mas (Mas1) from Rattus norvegicus (Rat).